The following is a 101-amino-acid chain: Acylphosphatase (101 aa).

Positions 15 to 101 (RMYARVYGLV…KGEFEDFETY (87 aa)) constitute an Acylphosphatase-like domain. Catalysis depends on residues arginine 30 and asparagine 48.

The protein belongs to the acylphosphatase family.

The catalysed reaction is an acyl phosphate + H2O = a carboxylate + phosphate + H(+). This chain is Acylphosphatase (acyP), found in Saccharolobus solfataricus (strain ATCC 35092 / DSM 1617 / JCM 11322 / P2) (Sulfolobus solfataricus).